Reading from the N-terminus, the 278-residue chain is Large ribosomal subunit protein uL2 (278 aa).

2 disordered regions span residues 28-56 and 221-278; these read KPVK…GIAG and RGVA…KKKR. Positions 269–278 are enriched in basic residues; that stretch reads IRSRHAKKKR.

This sequence belongs to the universal ribosomal protein uL2 family. In terms of assembly, part of the 50S ribosomal subunit. Forms a bridge to the 30S subunit in the 70S ribosome.

In terms of biological role, one of the primary rRNA binding proteins. Required for association of the 30S and 50S subunits to form the 70S ribosome, for tRNA binding and peptide bond formation. It has been suggested to have peptidyltransferase activity; this is somewhat controversial. Makes several contacts with the 16S rRNA in the 70S ribosome. The protein is Large ribosomal subunit protein uL2 of Rhizorhabdus wittichii (strain DSM 6014 / CCUG 31198 / JCM 15750 / NBRC 105917 / EY 4224 / RW1) (Sphingomonas wittichii).